A 135-amino-acid chain; its full sequence is P2Y purinoceptor 4 (135 aa).

A helical transmembrane segment spans residues 1–25; it reads VHFSSSVMVLLFGLPFLVTLVCYGL. Residues 26 to 49 lie on the Cytoplasmic side of the membrane; the sequence is MALRLCRPLPGAGQSSSRLRSLRT. A helical membrane pass occupies residues 50 to 72; the sequence is IAVVMTVFAVCLVPFHITRTIYY. Residues 73-90 are Extracellular-facing; it reads LARLLKADCQILNIVNVV. Residues 91 to 112 traverse the membrane as a helical segment; it reads YKVTRPLASANSCLDPLLYLFT. The Cytoplasmic portion of the chain corresponds to 113–135; that stretch reads GDKYRHQLQRLCRVSAPQRRITA.

The protein belongs to the G-protein coupled receptor 1 family. Expressed in brain, heart, stria vascularis and vestibular labyrinth.

The protein resides in the cell membrane. Receptor for ATP and UTP coupled to G-proteins that activate a phosphatidylinositol-calcium second messenger system. Not activated by UDP. The polypeptide is P2Y purinoceptor 4 (P2RY4) (Meriones unguiculatus (Mongolian jird)).